The following is a 722-amino-acid chain: Cellulose synthase-like protein G2 (722 aa).

The next 2 helical transmembrane spans lie at 25-45 (IYAV…VHSI) and 51-71 (TLIT…WATT). Active-site residues include D139 and D437. A run of 6 helical transmembrane segments spans residues 514 to 534 (FWPF…VALI), 548 to 568 (FWLY…DFLL), 583 to 605 (WMVR…TLNL), 635 to 655 (PSSS…LAFM), 660 to 680 (GIFT…FAVV), and 702 to 722 (ICFL…FFLK).

The protein belongs to the glycosyltransferase 2 family. Plant cellulose synthase-like G subfamily. In terms of tissue distribution, expressed in young seedlings, primarily in the vascular tissue.

It is found in the golgi apparatus membrane. Its function is as follows. Thought to be a Golgi-localized beta-glycan synthase that polymerize the backbones of noncellulosic polysaccharides (hemicelluloses) of plant cell wall. This is Cellulose synthase-like protein G2 (CSLG2) from Arabidopsis thaliana (Mouse-ear cress).